The sequence spans 100 residues: NADH-quinone oxidoreductase subunit K (100 aa).

3 helical membrane passes run 3–23 (PTSYYILLSALLFTLGVVGVI), 29–49 (LVLFMSVELMLNSANLALVTF), and 60–80 (IVVFFVIVVAAAEVAVGLALL).

The protein belongs to the complex I subunit 4L family. As to quaternary structure, NDH-1 is composed of 14 different subunits. Subunits NuoA, H, J, K, L, M, N constitute the membrane sector of the complex.

Its subcellular location is the cell membrane. The catalysed reaction is a quinone + NADH + 5 H(+)(in) = a quinol + NAD(+) + 4 H(+)(out). Its function is as follows. NDH-1 shuttles electrons from NADH, via FMN and iron-sulfur (Fe-S) centers, to quinones in the respiratory chain. The immediate electron acceptor for the enzyme in this species is believed to be ubiquinone. Couples the redox reaction to proton translocation (for every two electrons transferred, four hydrogen ions are translocated across the cytoplasmic membrane), and thus conserves the redox energy in a proton gradient. The protein is NADH-quinone oxidoreductase subunit K of Roseiflexus castenholzii (strain DSM 13941 / HLO8).